We begin with the raw amino-acid sequence, 66 residues long: Large ribosomal subunit protein bL35 (66 aa).

Basic residues predominate over residues 1–26 (MPKMKTHRGGAKRVKRTGSGKLKRSR). Disordered stretches follow at residues 1-28 (MPKM…SRAY) and 36-55 (KSTK…KGDQ).

Belongs to the bacterial ribosomal protein bL35 family.

The polypeptide is Large ribosomal subunit protein bL35 (Macrococcus caseolyticus (strain JCSC5402) (Macrococcoides caseolyticum)).